We begin with the raw amino-acid sequence, 159 residues long: SsrA-binding protein (159 aa).

It belongs to the SmpB family.

Its subcellular location is the cytoplasm. Functionally, required for rescue of stalled ribosomes mediated by trans-translation. Binds to transfer-messenger RNA (tmRNA), required for stable association of tmRNA with ribosomes. tmRNA and SmpB together mimic tRNA shape, replacing the anticodon stem-loop with SmpB. tmRNA is encoded by the ssrA gene; the 2 termini fold to resemble tRNA(Ala) and it encodes a 'tag peptide', a short internal open reading frame. During trans-translation Ala-aminoacylated tmRNA acts like a tRNA, entering the A-site of stalled ribosomes, displacing the stalled mRNA. The ribosome then switches to translate the ORF on the tmRNA; the nascent peptide is terminated with the 'tag peptide' encoded by the tmRNA and targeted for degradation. The ribosome is freed to recommence translation, which seems to be the essential function of trans-translation. The protein is SsrA-binding protein of Dichelobacter nodosus (strain VCS1703A).